A 279-amino-acid polypeptide reads, in one-letter code: NH(3)-dependent NAD(+) synthetase (279 aa).

40 to 47 lines the ATP pocket; it reads GLSGGIDS. Mg(2+) is bound at residue aspartate 46. Arginine 122 is a deamido-NAD(+) binding site. Position 142 (threonine 142) interacts with ATP. Glutamate 147 lines the Mg(2+) pocket. Deamido-NAD(+) is bound by residues lysine 155 and aspartate 162. Lysine 171 and serine 193 together coordinate ATP. 253–254 lines the deamido-NAD(+) pocket; sequence HK.

This sequence belongs to the NAD synthetase family. In terms of assembly, homodimer.

It catalyses the reaction deamido-NAD(+) + NH4(+) + ATP = AMP + diphosphate + NAD(+) + H(+). The protein operates within cofactor biosynthesis; NAD(+) biosynthesis; NAD(+) from deamido-NAD(+) (ammonia route): step 1/1. Catalyzes the ATP-dependent amidation of deamido-NAD to form NAD. Uses ammonia as a nitrogen source. In Sulfurisphaera tokodaii (strain DSM 16993 / JCM 10545 / NBRC 100140 / 7) (Sulfolobus tokodaii), this protein is NH(3)-dependent NAD(+) synthetase.